Consider the following 927-residue polypeptide: Protein unc-45 homolog B (927 aa).

TPR repeat units follow at residues 4 to 37 (PVQL…ITDK), 41 to 74 (AVLY…DASD), and 76 to 108 (KALF…EPKN). ARM repeat units lie at residues 167–206 (DAGA…GMCT), 209–248 (RARA…NIVD), and 746–785 (DKLR…NLAV).

It is found in the cytoplasm. Its subcellular location is the myofibril. The protein resides in the sarcomere. The protein localises to the z line. It localises to the a band. It is found in the perinuclear region. Its subcellular location is the cytosol. In terms of biological role, acts as a co-chaperone for HSP90 and is required for proper folding of the myosin motor domain. Plays a role in sarcomere formation during muscle cell assembly. Is necessary for normal early lens development. The chain is Protein unc-45 homolog B from Xenopus laevis (African clawed frog).